Here is a 254-residue protein sequence, read N- to C-terminus: 3-deoxy-manno-octulosonate cytidylyltransferase (254 aa).

The protein belongs to the KdsB family.

The protein localises to the cytoplasm. The catalysed reaction is 3-deoxy-alpha-D-manno-oct-2-ulosonate + CTP = CMP-3-deoxy-beta-D-manno-octulosonate + diphosphate. The protein operates within nucleotide-sugar biosynthesis; CMP-3-deoxy-D-manno-octulosonate biosynthesis; CMP-3-deoxy-D-manno-octulosonate from 3-deoxy-D-manno-octulosonate and CTP: step 1/1. It functions in the pathway bacterial outer membrane biogenesis; lipopolysaccharide biosynthesis. Activates KDO (a required 8-carbon sugar) for incorporation into bacterial lipopolysaccharide in Gram-negative bacteria. The chain is 3-deoxy-manno-octulosonate cytidylyltransferase from Pseudomonas fluorescens (strain SBW25).